A 122-amino-acid chain; its full sequence is Large ribosomal subunit protein eL22B (122 aa).

This sequence belongs to the eukaryotic ribosomal protein eL22 family. In terms of assembly, component of the large ribosomal subunit (LSU). Mature yeast ribosomes consist of a small (40S) and a large (60S) subunit. The 40S small subunit contains 1 molecule of ribosomal RNA (18S rRNA) and 33 different proteins (encoded by 57 genes). The large 60S subunit contains 3 rRNA molecules (25S, 5.8S and 5S rRNA) and 46 different proteins (encoded by 81 genes).

It localises to the cytoplasm. Its function is as follows. Component of the ribosome, a large ribonucleoprotein complex responsible for the synthesis of proteins in the cell. The small ribosomal subunit (SSU) binds messenger RNAs (mRNAs) and translates the encoded message by selecting cognate aminoacyl-transfer RNA (tRNA) molecules. The large subunit (LSU) contains the ribosomal catalytic site termed the peptidyl transferase center (PTC), which catalyzes the formation of peptide bonds, thereby polymerizing the amino acids delivered by tRNAs into a polypeptide chain. The nascent polypeptides leave the ribosome through a tunnel in the LSU and interact with protein factors that function in enzymatic processing, targeting, and the membrane insertion of nascent chains at the exit of the ribosomal tunnel. The chain is Large ribosomal subunit protein eL22B from Saccharomyces cerevisiae (strain ATCC 204508 / S288c) (Baker's yeast).